The sequence spans 381 residues: E3 ubiquitin-protein ligase ATL15 (381 aa).

An N-terminal signal peptide occupies residues 1 to 23; it reads MVVMSRVSFYSSFLLLLLEVVVA. A helical transmembrane segment spans residues 40–60; the sequence is AIIMIVLVSVFFALGCISVYM. The RING-type; atypical zinc-finger motif lies at 118-160; that stretch reads CPVCLNEFEDDETLRLIPQCCHVFHPGCIDAWLRSQTTCPLCR.

This sequence belongs to the RING-type zinc finger family. ATL subfamily.

The protein resides in the membrane. It catalyses the reaction S-ubiquitinyl-[E2 ubiquitin-conjugating enzyme]-L-cysteine + [acceptor protein]-L-lysine = [E2 ubiquitin-conjugating enzyme]-L-cysteine + N(6)-ubiquitinyl-[acceptor protein]-L-lysine.. The protein operates within protein modification; protein ubiquitination. Functionally, E3 ubiquitin-protein ligase able to catalyze polyubiquitination with ubiquitin-conjugating enzyme E2 UBC8, UBC10, UBC11, UBC28 and UBC29 in vitro. The polypeptide is E3 ubiquitin-protein ligase ATL15 (ATL15) (Arabidopsis thaliana (Mouse-ear cress)).